The chain runs to 1372 residues: Collagen alpha-2(I) chain (1372 aa).

Positions M1 to C22 are cleaved as a signal peptide. Position 23 is a pyrrolidone carboxylic acid (Q23). Residues Q23–A85 constitute a propeptide, N-terminal propeptide. Residues G28–R1135 are disordered. Positions V59–P77 are enriched in pro residues. The residue at position 86 (Q86) is a Pyrrolidone carboxylic acid. Allysine is present on K90. Residues G95–K146 are compositionally biased toward low complexity. A compositionally biased stretch (basic and acidic residues) spans A147–E161. Position 183 is a 5-hydroxylysine; alternate (K183). Residue K183 is glycosylated (O-linked (Gal...) hydroxylysine; alternate). Composition is skewed to low complexity over residues V231–P260, A285–P299, P306–P327, P336–R348, P390–A416, L476–A495, and P519–Q537. Residues G544–G553 show a composition bias toward gly residues. Residues P600–A639 show a composition bias toward low complexity. Over residues G640–G649 the composition is skewed to gly residues. Composition is skewed to low complexity over residues N674–S716 and P725–A743. Over residues K744–K753 the composition is skewed to basic and acidic residues. Low complexity predominate over residues E755–S771. Positions G781 to G790 are enriched in gly residues. The Cell attachment site motif lies at R783 to D785. Residues T792 to T801 show a composition bias toward low complexity. Residues R828–D830 carry the Cell attachment site motif. 4 stretches are compositionally biased toward low complexity: residues S855–P882, P891–P927, P957–A978, and P987–P1007. A Cell attachment site motif is present at residues R1011–D1013. Residues R1011–A1022 are compositionally biased toward basic and acidic residues. The segment covering A1095–P1107 has biased composition (pro residues). A compositionally biased stretch (gly residues) spans G1108 to G1120. A propeptide spans D1126–K1372 (C-terminal propeptide). One can recognise a Fibrillar collagen NC1 domain in the interval Y1139–K1372. Intrachain disulfides connect C1169–C1201, C1209–C1370, and C1278–C1323. 5 residues coordinate Ca(2+): D1187, N1189, Q1190, C1192, and D1195. N1273 carries an N-linked (GlcNAc...) asparagine glycan.

It belongs to the fibrillar collagen family. As to quaternary structure, trimers of one alpha 2(I) and two alpha 1(I) chains. Interacts (via C-terminus) with TMEM131 (via PapD-L domain); the interaction is direct and is involved in assembly and TRAPPIII ER-to-Golgi transport complex-dependent secretion of collagen. In terms of processing, proline residues at the third position of the tripeptide repeating unit (G-X-P) are hydroxylated in some or all of the chains. Proline residues at the second position of the tripeptide repeating unit (G-P-X) are hydroxylated in some of the chains. In terms of tissue distribution, forms the fibrils of tendon, ligaments and bones. In bones the fibrils are mineralized with calcium hydroxyapatite. Expressed in flagella of epididymal sperm.

The protein localises to the secreted. It localises to the extracellular space. Its subcellular location is the extracellular matrix. In terms of biological role, type I collagen is a member of group I collagen (fibrillar forming collagen). The chain is Collagen alpha-2(I) chain (Col1a2) from Rattus norvegicus (Rat).